We begin with the raw amino-acid sequence, 663 residues long: Polyunsaturated fatty acid lipoxygenase ALOX12 (663 aa).

One can recognise a PLAT domain in the interval 2-114 (GRYRIRVATG…ILSLPEGTAR (113 aa)). Residues 115–663 (LPGDNALDMF…PSCIENSVTI (549 aa)) enclose the Lipoxygenase domain. Residue serine 246 is modified to Phosphoserine. Positions 360, 365, 540, 544, and 663 each coordinate Fe cation.

Belongs to the lipoxygenase family. Fe cation serves as cofactor. In terms of tissue distribution, expressed in vascular smooth muscle cells.

The protein localises to the cytoplasm. The protein resides in the cytosol. It localises to the membrane. The catalysed reaction is (5Z,8Z,11Z,14Z)-eicosatetraenoate + O2 = (12S)-hydroperoxy-(5Z,8Z,10E,14Z)-eicosatetraenoate. The enzyme catalyses (5Z,8Z,11Z,14Z)-eicosatetraenoate + O2 = (15S)-hydroperoxy-(5Z,8Z,11Z,13E)-eicosatetraenoate. It carries out the reaction 2 leukotriene A4 + O2 + 2 H2O = 2 lipoxin A4. It catalyses the reaction 2 leukotriene A4 + O2 + 2 H2O = 2 lipoxin B4. The catalysed reaction is (14S)-hydroperoxy-(4Z,7Z,10Z,12E,16Z,19Z)-docosahexaenoate = (13S,14S)-epoxy-(4Z,7Z,9E,11E,16Z,19Z)-docosahexaenoate + H2O. The enzyme catalyses N-(5Z,8Z,11Z,14Z)-eicosatetraenoyl-L-alanine + O2 = N-(15S)-hydroperoxy-(5Z,8Z,11Z,13E)-eicosatetraenoyl-alanine. It carries out the reaction N-(5Z,8Z,11Z,14Z)-eicosatetraenoyl-L-alanine + O2 = N-(12S)-hydroperoxy-(5Z,8Z,10E,14Z)-eicosatetraenoyl-alanine. It catalyses the reaction N-(5Z,8Z,11Z,14Z)-eicosatetraenoyl-gamma-aminobutanoate + O2 = N-(15S)-hydroperoxy-(5Z,8Z,11Z,13E)-eicosatetraenoyl-gamma-aminobutanoate. The catalysed reaction is N-(5Z,8Z,11Z,14Z)-eicosatetraenoyl-gamma-aminobutanoate + O2 = N-(12S)-hydroperoxy-(5Z,8Z,10E,14Z)-eicosatetraenoyl-gamma-aminobutanoate. The enzyme catalyses N-(5Z,8Z,11Z,14Z)-eicosatetraenoyl-glycine + O2 = N-(15S)-hydroperoxy-(5Z,8Z,11Z,13E)-eicosatetraenoyl-glycine. It carries out the reaction N-(5Z,8Z,11Z,14Z)-eicosatetraenoyl-glycine + O2 = N-(12S)-hydroperoxy-(5Z,8Z,10E,14Z)-eicosatetraenoyl-glycine. It catalyses the reaction N-(5Z,8Z,11Z,14Z)-eicosatetraenoyl-taurine + O2 = N-(12S)-hydroperoxy-(5Z,8Z,10E,14Z)-eicosatetraenoyl-taurine. The catalysed reaction is N-(5Z,8Z,11Z,14Z)-eicosatetraenoyl-taurine + O2 = N-(15S)-hydroperoxy-(5Z,8Z,11Z,13E)-eicosatetraenoyl-taurine. The enzyme catalyses (4Z,7Z,10Z,13Z,16Z,19Z)-docosahexaenoate + O2 = (14S)-hydroperoxy-(4Z,7Z,10Z,12E,16Z,19Z)-docosahexaenoate. It carries out the reaction (7S)-hydroperoxy-(4Z,8E,10Z,13Z,16Z,19Z)-docosahexaenoate + O2 = (7S,14S)-dihydroperoxy-(4Z,8E,10Z,12E,16Z,19Z)-docosahexaenoate. It catalyses the reaction (7S)-hydroperoxy-(4Z,8E,10Z,13Z,16Z,19Z)-docosahexaenoate + O2 = (7S,17S)-dihydroperoxy-(4Z,8E,10Z,13Z,15E,19Z)-docosahexaenoate. The catalysed reaction is (5Z,8Z,11Z,14Z,17Z)-eicosapentaenoate + O2 = (12S)-hydroperoxy-(5Z,8Z,10E,14Z,17Z)-eicosapentaenoate. The enzyme catalyses (8Z,11Z,14Z)-eicosatrienoate + O2 = (12S)-hydroperoxy-(8Z,10E,14Z)-eicosatrienoate. It carries out the reaction (9Z,12Z)-octadecadienoate + O2 = (13S)-hydroperoxy-(9Z,11E)-octadecadienoate. It catalyses the reaction (5Z,8Z,11Z)-eicosatrienoate + O2 = (12S)-hydroperoxy-(5Z,8Z,10E)-eicosatrienoate. The catalysed reaction is (14R,15S)-epoxy-(5Z,8Z,11Z)-eicosatrienoate + O2 = (12S)-hydroperoxy-(14R,15S)-epoxy-(5Z,8Z,10E)-eicosatrienoate. The enzyme catalyses (14S,15R)-epoxy-(5Z,8Z,11Z)-eicosatrienoate + O2 = (12S)-hydroperoxy-(14S,15R)-epoxy-(5Z,8Z,10E)-eicosatrienoate. It functions in the pathway lipid metabolism; hydroperoxy eicosatetraenoic acid biosynthesis. Activated by EGF. Arachidonic acid conversion is inhibited by (13S,14S)-epoxy-(4Z,7Z,9E,11E,16Z,19Z)-docosahexaenoate (13S,14S-epoxy-DHA). Arachidonate 12-lipoxygenase activity is decreased when PH decreases from 7.4 to 6. Its function is as follows. Catalyzes the regio and stereo-specific incorporation of molecular oxygen into free and esterified polyunsaturated fatty acids generating lipid hydroperoxides that can be further reduced to the corresponding hydroxy species. Mainly converts arachidonate ((5Z,8Z,11Z,14Z)-eicosatetraenoate) to the specific bioactive lipid (12S)-hydroperoxyeicosatetraenoate/(12S)-HPETE. Through the production of bioactive lipids like (12S)-HPETE it regulates different biological processes including platelet activation. It can also catalyze the epoxidation of double bonds of polyunsaturated fatty acids such as (14S)-hydroperoxy-docosahexaenoate/(14S)-HPDHA resulting in the formation of (13S,14S)-epoxy-DHA. Furthermore, it may participate in the sequential oxidations of DHA ((4Z,7Z,10Z,13Z,16Z,19Z)-docosahexaenoate) to generate specialized pro-resolving mediators (SPMs) like resolvin D5 ((7S,17S)-diHPDHA) and (7S,14S)-diHPDHA, that actively down-regulate the immune response and have anti-aggregation properties with platelets. An additional function involves a multistep process by which it transforms leukotriene A4/LTA4 into the bioactive lipids lipoxin A4/LXA4 and lipoxin B4/LXB4, both are vasoactive and LXA4 may regulate neutrophil function via occupancy of specific recognition sites. Can also peroxidize linoleate ((9Z,12Z)-octadecadienoate) to (13S)-hydroperoxyoctadecadienoate/ (13S-HPODE). Due to its role in regulating both the expression of the vascular endothelial growth factor (VEGF, an angiogenic factor involved in the survival and metastasis of solid tumors) and the expression of integrin beta-1 (known to affect tumor cell migration and proliferation), it can be regarded as protumorigenic. Important for cell survival, as it may play a role not only in proliferation but also in the prevention of apoptosis in vascular smooth muscle cells. The sequence is that of Polyunsaturated fatty acid lipoxygenase ALOX12 from Homo sapiens (Human).